A 359-amino-acid chain; its full sequence is 3-dehydroquinate synthase (359 aa).

NAD(+)-binding positions include 72-77, 106-110, 130-131, K143, K152, and 170-173; these read EGEIHK, GVIGD, TS, and CLKT. 3 residues coordinate Zn(2+): E185, H248, and H264.

This sequence belongs to the sugar phosphate cyclases superfamily. Dehydroquinate synthase family. The cofactor is Co(2+). It depends on Zn(2+) as a cofactor. Requires NAD(+) as cofactor.

It is found in the cytoplasm. The catalysed reaction is 7-phospho-2-dehydro-3-deoxy-D-arabino-heptonate = 3-dehydroquinate + phosphate. Its pathway is metabolic intermediate biosynthesis; chorismate biosynthesis; chorismate from D-erythrose 4-phosphate and phosphoenolpyruvate: step 2/7. Functionally, catalyzes the conversion of 3-deoxy-D-arabino-heptulosonate 7-phosphate (DAHP) to dehydroquinate (DHQ). The protein is 3-dehydroquinate synthase of Dehalococcoides mccartyi (strain ATCC BAA-2100 / JCM 16839 / KCTC 5957 / BAV1).